The sequence spans 98 residues: Cystatin-A (98 aa).

Residue M1 is modified to N-acetylmethionine. Residues 46–50 (QVVAG) carry the Secondary area of contact motif.

The protein belongs to the cystatin family.

Its subcellular location is the cytoplasm. Its function is as follows. This is an intracellular thiol proteinase inhibitor. This is Cystatin-A (CSTA) from Bos taurus (Bovine).